Reading from the N-terminus, the 140-residue chain is Phosphoribosyl-AMP cyclohydrolase (140 aa).

Residue Asp78 participates in Mg(2+) binding. Cys79 contributes to the Zn(2+) binding site. Mg(2+) contacts are provided by Asp80 and Asp82. Zn(2+) contacts are provided by Cys96 and Cys103.

It belongs to the PRA-CH family. As to quaternary structure, homodimer. Mg(2+) is required as a cofactor. Zn(2+) serves as cofactor.

The protein resides in the cytoplasm. It catalyses the reaction 1-(5-phospho-beta-D-ribosyl)-5'-AMP + H2O = 1-(5-phospho-beta-D-ribosyl)-5-[(5-phospho-beta-D-ribosylamino)methylideneamino]imidazole-4-carboxamide. It functions in the pathway amino-acid biosynthesis; L-histidine biosynthesis; L-histidine from 5-phospho-alpha-D-ribose 1-diphosphate: step 3/9. Its function is as follows. Catalyzes the hydrolysis of the adenine ring of phosphoribosyl-AMP. This chain is Phosphoribosyl-AMP cyclohydrolase, found in Ralstonia nicotianae (strain ATCC BAA-1114 / GMI1000) (Ralstonia solanacearum).